Reading from the N-terminus, the 59-residue chain is UPF0434 protein COSY_0767 (59 aa).

Belongs to the UPF0434 family.

The sequence is that of UPF0434 protein COSY_0767 from Vesicomyosocius okutanii subsp. Calyptogena okutanii (strain HA).